A 114-amino-acid chain; its full sequence is Probable 4-amino-4-deoxy-L-arabinose-phosphoundecaprenol flippase subunit ArnE (114 aa).

Residues 39–112 form the EamA domain; it reads RSPWLWLALF…VIGGVALLGQ (74 aa). The next 3 membrane-spanning stretches (helical) occupy residues 41 to 61, 64 to 84, and 91 to 111; these read PWLW…LLVL, LPVS…TLIA, and PVDV…ALLG.

This sequence belongs to the ArnE family. In terms of assembly, heterodimer of ArnE and ArnF.

It is found in the cell inner membrane. The protein operates within bacterial outer membrane biogenesis; lipopolysaccharide biosynthesis. Translocates 4-amino-4-deoxy-L-arabinose-phosphoundecaprenol (alpha-L-Ara4N-phosphoundecaprenol) from the cytoplasmic to the periplasmic side of the inner membrane. The sequence is that of Probable 4-amino-4-deoxy-L-arabinose-phosphoundecaprenol flippase subunit ArnE from Pseudomonas fluorescens (strain Pf0-1).